The chain runs to 377 residues: MVRQLILVLSLILFCGSSHAVVSELARQSESAIQGLADIKMAPLRYLDVLFGGNPGGLRGLDGGNSASLSTLQAAKVANILARGDIASSGYSKISAGVGKGSDLITIIKNTRSYDPYLIPPGIPGYNYPLGWPLRYPLGPYWPNRPPWLPINSPPIRPGGLFPGGPSPGGPSPGEPSPGEPSPGGPSPGGPSPGGPSPGGPSPGGPSPGGPSPGGPFPGGSPPSPGGPLGPWQFPWILGGPRPNRPGRPFPGGILPGHLDGSVVPNSVLNVAGGIFGNGGLFGTGIFGQHGLFGTGFLSGPSLDPFGIFTPIGNFFGSLGNLFGFSSPSQIIPIFGGKFGPLGRGLQGSITLDVGGTVPSVKGILGQLLHPFLGFLG.

A signal peptide spans 1–20; it reads MVRQLILVLSLILFCGSSHA. The interval 155-253 is disordered; sequence PIRPGGLFPG…NRPGRPFPGG (99 aa). Residues 165 to 228 are compositionally biased toward pro residues; it reads GPSPGGPSPG…GGSPPSPGGP (64 aa).

Specifically expressed in the ejaculatory bulb and seminal fluid. Detected in mated females 3 minutes after the start of mating, and for at least 3 hours after the start of mating.

The protein resides in the secreted. Its function is as follows. Major protein component of the posterior mating plug. Accessory gland proteins constitute, or are required for formation of the anterior mating plug. Posterior mating plug forms before sperm transfer and the anterior mating plug is formed after the start of mating. The protein is Ejaculatory bulb-specific protein 1 of Drosophila melanogaster (Fruit fly).